The chain runs to 139 residues: uncharacterized protein (139 aa).

Helical transmembrane passes span 71 to 91 and 97 to 117; these read LFSA…ATLL and ENEL…FVMV.

Belongs to the RseC family.

Its subcellular location is the cell inner membrane. This is an uncharacterized protein from Haemophilus influenzae (strain ATCC 51907 / DSM 11121 / KW20 / Rd).